Consider the following 339-residue polypeptide: Phosphate acyltransferase (339 aa).

This sequence belongs to the PlsX family. In terms of assembly, homodimer. Probably interacts with PlsY.

It is found in the cytoplasm. The enzyme catalyses a fatty acyl-[ACP] + phosphate = an acyl phosphate + holo-[ACP]. It functions in the pathway lipid metabolism; phospholipid metabolism. Its function is as follows. Catalyzes the reversible formation of acyl-phosphate (acyl-PO(4)) from acyl-[acyl-carrier-protein] (acyl-ACP). This enzyme utilizes acyl-ACP as fatty acyl donor, but not acyl-CoA. The polypeptide is Phosphate acyltransferase (Ruthia magnifica subsp. Calyptogena magnifica).